An 870-amino-acid chain; its full sequence is Leucine--tRNA ligase (870 aa).

The 'HIGH' region motif lies at 42 to 52 (PYPSGKLHMGH). A 'KMSKS' region motif is present at residues 629–633 (KMSKS). K632 is an ATP binding site.

This sequence belongs to the class-I aminoacyl-tRNA synthetase family.

Its subcellular location is the cytoplasm. The catalysed reaction is tRNA(Leu) + L-leucine + ATP = L-leucyl-tRNA(Leu) + AMP + diphosphate. This chain is Leucine--tRNA ligase, found in Azotobacter vinelandii (strain DJ / ATCC BAA-1303).